The following is a 177-amino-acid chain: O-acetyl-ADP-ribose deacetylase (177 aa).

One can recognise a Macro domain in the interval 1–175; it reads MKSRIHVQHG…LYERLLTQQG (175 aa). Substrate is bound by residues 11 to 12, Asn25, 33 to 35, and 122 to 126; these read DI, GVD, and STGAY. The active-site Proton acceptor is Asp35.

It belongs to the MacroD-type family. YmdB subfamily. Homodimer. Interacts with RNase III.

The catalysed reaction is 3''-O-acetyl-ADP-D-ribose + H2O = ADP-D-ribose + acetate + H(+). The enzyme catalyses 2''-O-acetyl-ADP-D-ribose + H2O = ADP-D-ribose + acetate + H(+). Deacetylates O-acetyl-ADP ribose to yield ADP-ribose and free acetate. Down-regulates ribonuclease 3 (RNase III) activity. Acts by interacting directly with the region of the ribonuclease that is required for dimerization/activation. This is O-acetyl-ADP-ribose deacetylase from Citrobacter koseri (strain ATCC BAA-895 / CDC 4225-83 / SGSC4696).